The chain runs to 181 residues: Inorganic pyrophosphatase 2 (181 aa).

Substrate is bound by residues Lys-30, Arg-44, and Tyr-56. Asp-66, Asp-71, and Asp-103 together coordinate Mg(2+). Residue Tyr-142 participates in substrate binding.

The protein belongs to the PPase family. As to quaternary structure, homohexamer. Requires Mg(2+) as cofactor.

It localises to the cytoplasm. The catalysed reaction is diphosphate + H2O = 2 phosphate + H(+). Its function is as follows. Catalyzes the hydrolysis of inorganic pyrophosphate (PPi) forming two phosphate ions. This chain is Inorganic pyrophosphatase 2, found in Pseudomonas syringae pv. tomato (strain ATCC BAA-871 / DC3000).